Here is a 452-residue protein sequence, read N- to C-terminus: Glycine receptor subunit alpha-2 (452 aa).

The first 27 residues, 1–27 (MYRQLVNILTALFAFFLGTNHFREAFC), serve as a signal peptide directing secretion. The Extracellular segment spans residues 28-256 (KDHDSRSGKH…KFHLERQMGY (229 aa)). Asn-72 is a glycosylation site (N-linked (GlcNAc...) asparagine). A glycine-binding site is contributed by Arg-99. Position 99 (Arg-99) interacts with strychnine. Asn-103 is a glycosylation site (N-linked (GlcNAc...) asparagine). Ser-163 serves as a coordination point for glycine. Residues Cys-172 and Cys-186 are joined by a disulfide bond. Zn(2+) contacts are provided by Glu-226 and Glu-228. Cys-232 and Cys-243 are oxidised to a cystine. Thr-238 is a binding site for glycine. Residue His-249 participates in Zn(2+) binding. The chain crosses the membrane as a helical span at residues 257–278 (YLIQMYIPSLLIVILSWVSFWI). Topologically, residues 279–283 (NMDAA) are cytoplasmic. The chain crosses the membrane as a helical span at residues 284-304 (PARVALGITTVLTMTTQSSGS). Residues 305–315 (RASLPKVSYVK) are Extracellular-facing. A helical transmembrane segment spans residues 316–336 (AIDIWMAVCLLFVFAALLEYA). Residues 337 to 420 (AVNFVSRQHK…FVDRAKRIDT (84 aa)) lie on the Cytoplasmic side of the membrane. The helical transmembrane segment at 421 to 441 (ISRAAFPLAFLIFNIFYWITY) threads the bilayer. At 442-452 (KIIRHEDVHKK) the chain is on the extracellular side.

It belongs to the ligand-gated ion channel (TC 1.A.9) family. Glycine receptor (TC 1.A.9.3) subfamily. GLRA2 sub-subfamily. In terms of assembly, interacts with GLRB. Heteropentamer composed of GLRA2 and GLRB; functional GLRB-GLRA2 heteropentamers contain four GLRA2 subunits and one GLRB subunit, although alternative subunit composition cannot be excluded. Homopentamer (in vitro). Both homopentamers and heteropentamers form functional ion channels, but their characteristics are subtly different. Detected in the retina inner plexiform layer (at protein level). Detected in neonate retina. Detected in brain. Detected in spinal cord, with higher levels in the dorsal horn.

Its subcellular location is the postsynaptic cell membrane. The protein localises to the synapse. The protein resides in the cell membrane. It localises to the cell projection. It catalyses the reaction chloride(in) = chloride(out). Channel opening is triggered by extracellular glycine. Channel opening is also triggered by taurine and beta-alanine. Inhibited by strychnine. Inhibited by picrotoxin. Subunit of heteromeric glycine-gated chloride channels. Plays a role in synaptic plasticity. Contributes to the generation of inhibitory postsynaptic currents, and is involved in the down-regulation of neuronal excitability. Plays a role in cellular responses to ethanol. The polypeptide is Glycine receptor subunit alpha-2 (Mus musculus (Mouse)).